We begin with the raw amino-acid sequence, 444 residues long: Aflatoxin biosynthesis regulatory protein (444 aa).

Positions 1–25 (MVDHISPRASPGPIRSSQTRRARKL) are disordered. Residues 29–56 (CTSCASSKVRCTKEKPACARCIERGLAC) constitute a DNA-binding region (zn(2)-C6 fungal-type). Residues 64–174 (MGRNPRAPSP…AGQEQSTLSS (111 aa)) form a disordered region. The segment covering 106–116 (TQAHTHAHSHP) has biased composition (basic residues). A compositionally biased stretch (low complexity) spans 120–130 (PQSHPQSNQPP). Residues 136-149 (PNGSSSVSAIFSHQ) are compositionally biased toward polar residues.

In terms of assembly, interacts with aflS.

The protein localises to the nucleus. In terms of biological role, transcription factor; part of the gene cluster that mediates the biosynthesis of aflatoxin, a polyketide-derived furanocoumarin which is part of the most toxic and carcinogenic compounds among the known mycotoxins. Binds to at least 17 genes in the aflatoxin biosynthetic cluster, leading to the activation of an enzymatic cascade reaction that results in aflatoxin biosynthesis. Promoter regions of several biosynthesis genes are bound by aflR in a dimeric form with a 5'-TCG(N5)CGA-3' binding motif. AflR also recognizes 5'-TTAGGCCTAA-3' and 5'-TCGCAGCCCGG-3' binding sequences. AflR achieves its binding specificity through a mechanism in which either two copies of aflR or its complex with aflS bind to target sites on DNA in a highly cooperative manner. AflS acts as a modulator of aflR's DNA-binding by decreasing its DNA-binding affinity. In addition to aflatoxin biosynthesis, also plays a positive role in the fungal growth, spore germination, sclerotial development, and carbohydrate metabolism. The polypeptide is Aflatoxin biosynthesis regulatory protein (Aspergillus flavus (strain ATCC 200026 / FGSC A1120 / IAM 13836 / NRRL 3357 / JCM 12722 / SRRC 167)).